The primary structure comprises 132 residues: Transcription antitermination protein NusB (132 aa).

This sequence belongs to the NusB family.

Involved in transcription antitermination. Required for transcription of ribosomal RNA (rRNA) genes. Binds specifically to the boxA antiterminator sequence of the ribosomal RNA (rrn) operons. The protein is Transcription antitermination protein NusB of Lachnoclostridium phytofermentans (strain ATCC 700394 / DSM 18823 / ISDg) (Clostridium phytofermentans).